The following is an 89-amino-acid chain: Small ribosomal subunit protein uS15 (89 aa).

The segment covering 1-11 (MSITAERKAEV) has biased composition (basic and acidic residues). Residues 1 to 24 (MSITAERKAEVIKTSATKAGDTGS) form a disordered region.

This sequence belongs to the universal ribosomal protein uS15 family. Part of the 30S ribosomal subunit. Forms a bridge to the 50S subunit in the 70S ribosome, contacting the 23S rRNA.

One of the primary rRNA binding proteins, it binds directly to 16S rRNA where it helps nucleate assembly of the platform of the 30S subunit by binding and bridging several RNA helices of the 16S rRNA. Functionally, forms an intersubunit bridge (bridge B4) with the 23S rRNA of the 50S subunit in the ribosome. This Rhodopseudomonas palustris (strain TIE-1) protein is Small ribosomal subunit protein uS15.